A 283-amino-acid polypeptide reads, in one-letter code: 2-heptyl-4(1H)-quinolone synthase subunit PqsB (283 aa).

This sequence belongs to the thiolase-like superfamily. FabH family. In terms of assembly, forms a tight complex with PqsC.

It localises to the cytoplasm. With respect to regulation, activity of the complex is inhibited by 2-aminoacetophenone (2-AA). Required for the biosynthesis of the quorum-sensing signaling molecules 2-heptyl-4(1H)-quinolone (HHQ) and 2-heptyl-3-hydroxy-4(1H)-quinolone (Pseudomonas quinolone signal or PQS), which are important for biofilm formation and virulence. The PqsC/PqsB complex catalyzes the condensation of 2-aminobenzoylacetate (2-ABA) and octanoyl-CoA to form HHQ. PqsB, together with PqsC, catalyzes the coupling of 2-ABA with the octanoate group, leading to decarboxylation and dehydration, and resulting in closure of the quinoline ring. PqsB is probably required for the proper folding of PqsC rather than for a direct enzymatic role in the process. This is 2-heptyl-4(1H)-quinolone synthase subunit PqsB from Pseudomonas aeruginosa (strain ATCC 15692 / DSM 22644 / CIP 104116 / JCM 14847 / LMG 12228 / 1C / PRS 101 / PAO1).